Here is a 729-residue protein sequence, read N- to C-terminus: Circadian input-output histidine kinase CikA (729 aa).

Positions 1-169 (MPQPIFDRIL…QVTTQIRQSL (169 aa)) are N-terminal domain. Residues 170-314 (ELPELLKIAV…VEFLTHLSQH (145 aa)) are GAF domain. A Histidine kinase domain is found at 366–587 (TMSHELRTPL…TFTVGLPAIS (222 aa)). Histidine 369 carries the phosphohistidine; by autocatalysis modification. The tract at residues 613-729 (EGRIVLVSED…GLTSLATSAQ (117 aa)) is psR domain, binds KaiB.

This sequence in the N-terminal section; belongs to the phytochrome family. As to quaternary structure, homodimer. Part of the circadian clock (KaiA, KaiB, KaiC, CikA, RpaA, SasA), the composition of which varies during the circadian cycle. KaiA and CikA compete for binding to KaiB(fs). The PsR domain binds the KaiB:KaiC CI complex but poorly to either protein alone. KaiA and CikA bind to the same region of the KaiB(fs) form and therefore compete.

It catalyses the reaction ATP + protein L-histidine = ADP + protein N-phospho-L-histidine.. In terms of biological role, functions in an input pathway to the Kai circadian clock. Senses oxidized quinones via its C-terminal pseudo-receiver domain, providing a link between cell metabolism and the clock. Affects the ratio of phosphorylated to unphosphorylated KaiC, binds quinones via its pseudo-receptor domain. Quinone-binding destabilizes the protein rapidly. Autophosphorylates, does not transfer the phosphate to its pseudo-receiver (PsR) domain. May play a role in cell division. Functionally, also functions in a two-component CikA/RpaA output pathway from the circadian clock, negatively regulating kaiBC expression independently of labA and of sasA. One of three clock output pathways. Dephosphorylates phospho-RpaA, enhanced by KaiB and KaiC, has only modest kinase activity on RpaA. The chain is Circadian input-output histidine kinase CikA from Thermosynechococcus vestitus (strain NIES-2133 / IAM M-273 / BP-1).